Here is a 670-residue protein sequence, read N- to C-terminus: DNA ligase (670 aa).

Residues 36-40 (DAQYD), 85-86 (SL), and Glu116 each bind NAD(+). Lys118 functions as the N6-AMP-lysine intermediate in the catalytic mechanism. NAD(+)-binding residues include Arg139, Glu174, Lys290, and Lys314. Residues Cys408, Cys411, Cys426, and Cys431 each coordinate Zn(2+). A BRCT domain is found at 591-670 (STDQTLSGKT…QDFVKLLQQQ (80 aa)).

It belongs to the NAD-dependent DNA ligase family. LigA subfamily. Mg(2+) is required as a cofactor. It depends on Mn(2+) as a cofactor.

The enzyme catalyses NAD(+) + (deoxyribonucleotide)n-3'-hydroxyl + 5'-phospho-(deoxyribonucleotide)m = (deoxyribonucleotide)n+m + AMP + beta-nicotinamide D-nucleotide.. Its function is as follows. DNA ligase that catalyzes the formation of phosphodiester linkages between 5'-phosphoryl and 3'-hydroxyl groups in double-stranded DNA using NAD as a coenzyme and as the energy source for the reaction. It is essential for DNA replication and repair of damaged DNA. The chain is DNA ligase from Desulforamulus reducens (strain ATCC BAA-1160 / DSM 100696 / MI-1) (Desulfotomaculum reducens).